A 113-amino-acid polypeptide reads, in one-letter code: Hydrogenase maturation factor HypA (113 aa).

Residue histidine 2 coordinates Ni(2+). Positions 73, 76, 89, and 92 each coordinate Zn(2+).

The protein belongs to the HypA/HybF family.

Involved in the maturation of [NiFe] hydrogenases. Required for nickel insertion into the metal center of the hydrogenase. This is Hydrogenase maturation factor HypA from Chlorobaculum parvum (strain DSM 263 / NCIMB 8327) (Chlorobium vibrioforme subsp. thiosulfatophilum).